Reading from the N-terminus, the 256-residue chain is Protein YIPF7 (256 aa).

Over 1–125 (MSNLAQFDSD…VDGSIMNETD (125 aa)) the chain is Cytoplasmic. Polar residues-rich tracts occupy residues 18-31 (IDNQ…SNAY) and 38-48 (RKQQAGEQPQP). The interval 18–48 (IDNQEQSGNDSNAYGNLYGSRKQQAGEQPQP) is disordered. Residues 126–146 (LTGPILFCVALGATLLLAGKV) form a helical membrane-spanning segment. Q147 is a topological domain (extracellular). Residues 148–168 (FGYVYGMSAIGCLVIHALLNL) form a helical membrane-spanning segment. The Cytoplasmic segment spans residues 169–172 (MSSS). The helical transmembrane segment at 173–193 (GVSYGCVASVLGYCLLPMVIL) threads the bilayer. Over 194 to 196 (SGC) the chain is Extracellular. The helical transmembrane segment at 197–217 (AMFFSLQGIFGIMSSLVIIGW) threads the bilayer. Topologically, residues 218–235 (CSLSASKIFIAALHMEGQ) are cytoplasmic. Residues 236–256 (QLLVAYPCAILYGLFALLTIF) traverse the membrane as a helical segment.

Belongs to the YIP1 family.

Its subcellular location is the endoplasmic reticulum membrane. The protein resides in the golgi apparatus. The protein localises to the cis-Golgi network membrane. It localises to the trans-Golgi network membrane. This chain is Protein YIPF7 (YIPF7), found in Homo sapiens (Human).